The primary structure comprises 231 residues: 2-hydroxy-3-keto-5-methylthiopentenyl-1-phosphate phosphatase (231 aa).

Belongs to the HAD-like hydrolase superfamily. MtnX family.

It carries out the reaction 2-hydroxy-5-methylsulfanyl-3-oxopent-1-enyl phosphate + H2O = 1,2-dihydroxy-5-(methylsulfanyl)pent-1-en-3-one + phosphate. It participates in amino-acid biosynthesis; L-methionine biosynthesis via salvage pathway; L-methionine from S-methyl-5-thio-alpha-D-ribose 1-phosphate: step 4/6. Functionally, dephosphorylates 2-hydroxy-3-keto-5-methylthiopentenyl-1-phosphate (HK-MTPenyl-1-P) yielding 1,2-dihydroxy-3-keto-5-methylthiopentene (DHK-MTPene). In Bacillus pumilus (strain SAFR-032), this protein is 2-hydroxy-3-keto-5-methylthiopentenyl-1-phosphate phosphatase.